We begin with the raw amino-acid sequence, 495 residues long: uncharacterized protein (495 aa).

An N-terminal signal peptide occupies residues 1–17; it reads MRTLSLLILFLSTFLFA.

This is an uncharacterized protein from Aquifex aeolicus (strain VF5).